The sequence spans 145 residues: Basic phospholipase A2 PC10 (145 aa).

Positions 1 to 21 (MYPAHLLLLLAVCVSLLGASA) are cleaved as a signal peptide. A propeptide spanning residues 22-27 (IPPLPL) is cleaved from the precursor. Cystine bridges form between Cys-38/Cys-98, Cys-54/Cys-144, Cys-56/Cys-72, Cys-71/Cys-125, Cys-78/Cys-118, Cys-87/Cys-111, and Cys-105/Cys-116. Ca(2+)-binding residues include Tyr-55, Gly-57, and Gly-59. The active site involves His-75. Asp-76 contacts Ca(2+). The active site involves Asp-119.

It belongs to the phospholipase A2 family. Group I subfamily. D49 sub-subfamily. It depends on Ca(2+) as a cofactor.

The protein resides in the secreted. It carries out the reaction a 1,2-diacyl-sn-glycero-3-phosphocholine + H2O = a 1-acyl-sn-glycero-3-phosphocholine + a fatty acid + H(+). In terms of biological role, PLA2 catalyzes the calcium-dependent hydrolysis of the 2-acyl groups in 3-sn-phosphoglycerides. This is Basic phospholipase A2 PC10 from Laticauda laticaudata (Blue-ringed sea krait).